The chain runs to 260 residues: Ribonuclease HII (260 aa).

The region spanning 71 to 259 (ELVAGVDEVG…VHDAIVNKKN (189 aa)) is the RNase H type-2 domain. A divalent metal cation contacts are provided by Asp-77, Glu-78, and Asp-169.

This sequence belongs to the RNase HII family. The cofactor is Mn(2+). Mg(2+) is required as a cofactor.

The protein resides in the cytoplasm. The catalysed reaction is Endonucleolytic cleavage to 5'-phosphomonoester.. Endonuclease that specifically degrades the RNA of RNA-DNA hybrids. The sequence is that of Ribonuclease HII from Leuconostoc citreum (strain KM20).